Reading from the N-terminus, the 292-residue chain is WRKY transcription factor 55 (292 aa).

Positions 133–155 are disordered; sequence VERSGASGSSTPRQRRRKDEGEE. The WRKY DNA-binding region spans 167–235; it reads NTDLPPDDNH…YRGSHTCYNS (69 aa).

The protein belongs to the WRKY group III family.

The protein resides in the nucleus. In terms of biological role, transcription factor. Interacts specifically with the W box (5'-(T)TGAC[CT]-3'), a frequently occurring elicitor-responsive cis-acting element. In Arabidopsis thaliana (Mouse-ear cress), this protein is WRKY transcription factor 55 (WRKY55).